A 324-amino-acid polypeptide reads, in one-letter code: MAVPSVMVLPLLIVVFAGVYYVYNEVMRFMSKSVVRNKVVVITDAVSGMGSECARLFHAGGARLVLCGPSWDKLESLYDSLCSGSDPSQTFTPKLVLLDFSDMENISDVVSEICECYGCVDVLICNSSMKVKAPVQNLSLEMDKTIMDVNYFGPITLAKGVLPLMITRRTGQFVLVNSIQGKLALPFRTCYAASKHAVQAFFDCLRAEVEEFGISVSTISHTFINAGAENATPTEATPITATPTKATPTNPIWAYVCSKLNTHGVSPQILAQEIVRSVNRQSREVFLAHPVPTVALYIRALMPGCFFSVVSAGVRDGAMAEQLK.

A signal peptide spans methionine 1 to alanine 17. Residue valine 41 to valine 65 coordinates NAD(+). Serine 178 is a substrate binding site. Tyrosine 191 functions as the Proton acceptor in the catalytic mechanism.

The protein belongs to the short-chain dehydrogenases/reductases (SDR) family.

It localises to the secreted. In terms of biological role, putative oxidoreductase. The chain is Dehydrogenase/reductase SDR family member 7C-A (dhrs7ca) from Danio rerio (Zebrafish).